The sequence spans 183 residues: Glutathione-regulated potassium-efflux system ancillary protein KefG (183 aa).

It belongs to the NAD(P)H dehydrogenase (quinone) family. KefG subfamily. As to quaternary structure, interacts with KefB.

The protein resides in the cell inner membrane. It carries out the reaction a quinone + NADH + H(+) = a quinol + NAD(+). It catalyses the reaction a quinone + NADPH + H(+) = a quinol + NADP(+). Its function is as follows. Regulatory subunit of a potassium efflux system that confers protection against electrophiles. Required for full activity of KefB. The protein is Glutathione-regulated potassium-efflux system ancillary protein KefG of Salmonella paratyphi C (strain RKS4594).